The following is a 502-amino-acid chain: Rab11 family-interacting protein 4B (502 aa).

2 disordered regions span residues 1–49 and 71–98; these read MSIQ…EEGI and SALSSASLNEEQFEDYGEGEDGDCTTSS. Over residues 15 to 29 the composition is skewed to basic and acidic residues; that stretch reads EEGRGVERDSDRDSA. Polar residues predominate over residues 71–80; sequence SALSSASLNE. Positions 81–93 are enriched in acidic residues; the sequence is EQFEDYGEGEDGD. Positions 228-482 form a coiled coil; it reads DVKTKLKQEN…EEINLRLRQY (255 aa). The FIP-RBD domain occupies 439–501; it reads EAKNLFATQT…DHNPSILEIK (63 aa).

As to quaternary structure, homodimer. Forms a complex with Rab11 (rab11a or rab11b) and arf6.

The protein localises to the recycling endosome membrane. The protein resides in the cleavage furrow. It localises to the midbody. It is found in the cytoplasmic vesicle. Functionally, acts as a regulator of endocytic traffic by participating in membrane delivery. Required for the abscission step in cytokinesis, possibly by acting as an 'address tag' delivering recycling endosome membranes to the cleavage furrow during late cytokinesis. In Danio rerio (Zebrafish), this protein is Rab11 family-interacting protein 4B (rab11fip4b).